We begin with the raw amino-acid sequence, 967 residues long: Disks large homolog 1 (967 aa).

One can recognise an L27 domain in the interval 5–65; that stretch reads SSEKAHKAIE…LYEQTLLSER (61 aa). One can recognise a PDZ 1 domain in the interval 202 to 289; it reads NIVLEKGHTG…VVSLSLKRRK (88 aa). The interval 324–351 is disordered; that stretch reads IHSPSAPIHPPPPPPVHHGSLSQLSVGQ. Pro residues predominate over residues 330–339; the sequence is PIHPPPPPPV. PDZ domains follow at residues 361-448 and 510-591; these read VIDL…QQGT and PVQL…QYRP. Residues 619–690 form the SH3 domain; sequence RKSEYVRALF…PSKKRVEKRE (72 aa). The disordered stretch occupies residues 673 to 723; sequence EETAEGVIPSKKRVEKRERLRRKQVNFNSGSQSLGRNSSTTGLENRRGSRS. Over residues 682-696 the composition is skewed to basic residues; the sequence is SKKRVEKRERLRRKQ. Polar residues predominate over residues 697 to 715; that stretch reads VNFNSGSQSLGRNSSTTGL. One can recognise a Guanylate kinase-like domain in the interval 769-955; sequence VRPVIILGAL…VLSKVYSIIS (187 aa).

Belongs to the MAGUK family. In terms of assembly, homooligomerizes; requires L27 domain. Interacts (via L27 domain) with ajm-1; the interaction regulates ajm-1 apical junction location. In terms of tissue distribution, expressed in the apical junctions in the hypodermis. Expressed in epithelial cells in the reproductive system including vulva, uterus and spermatheca.

It localises to the membrane. The protein resides in the apical cell membrane. Its subcellular location is the cell junction. The protein localises to the adherens junction. It is found in the lateral cell membrane. It localises to the cytoplasm. Its function is as follows. Essential multidomain scaffolding protein required for normal development. Recruits channels, receptors and signaling molecules to discrete plasma membrane domains in polarized cells. Required for proper embryonic elongation. Acts upstream of ajm-1 and becomes localized to apical junctions independently of ajm-1. With let-413, cooperatively regulates ajm-1 localization to apical junctions and the establishment of newly formed epithelia. Plays a role in assembling the adherens junction by clustering ajm-1 and other proteins, to form electron-dense structures; may form a compartment distinct to that of hmp-1 and associated proteins. Plays a role in the directed outgrowth of seam cells, towards neighboring seam cells, during larval development. This Caenorhabditis elegans protein is Disks large homolog 1.